A 305-amino-acid chain; its full sequence is Probable 4-deoxy-4-formamido-L-arabinose-phosphoundecaprenol deformylase ArnD (305 aa).

The region spanning 7–262 (TKVGLRIDVD…QAKENNIEFV (256 aa)) is the NodB homology domain.

The protein belongs to the polysaccharide deacetylase family. ArnD deformylase subfamily.

It carries out the reaction 4-deoxy-4-formamido-alpha-L-arabinopyranosyl di-trans,octa-cis-undecaprenyl phosphate + H2O = 4-amino-4-deoxy-alpha-L-arabinopyranosyl di-trans,octa-cis-undecaprenyl phosphate + formate. It participates in glycolipid biosynthesis; 4-amino-4-deoxy-alpha-L-arabinose undecaprenyl phosphate biosynthesis; 4-amino-4-deoxy-alpha-L-arabinose undecaprenyl phosphate from UDP-4-deoxy-4-formamido-beta-L-arabinose and undecaprenyl phosphate: step 2/2. The protein operates within bacterial outer membrane biogenesis; lipopolysaccharide biosynthesis. In terms of biological role, catalyzes the deformylation of 4-deoxy-4-formamido-L-arabinose-phosphoundecaprenol to 4-amino-4-deoxy-L-arabinose-phosphoundecaprenol. The modified arabinose is attached to lipid A and is required for resistance to polymyxin and cationic antimicrobial peptides. The protein is Probable 4-deoxy-4-formamido-L-arabinose-phosphoundecaprenol deformylase ArnD of Shewanella sediminis (strain HAW-EB3).